The sequence spans 1009 residues: Epididymis-specific alpha-mannosidase (1009 aa).

A signal peptide spans 1-23 (MGQLCWLPLLAPLLLLRPPGVQS). Residues His-36, Asp-38, and Asp-151 each contribute to the Zn(2+) site. The active-site Nucleophile is the Asp-151. Asn-226, Asn-249, Asn-294, and Asn-336 each carry an N-linked (GlcNAc...) asparagine glycan. Residue His-420 coordinates Zn(2+). N-linked (GlcNAc...) asparagine glycosylation is found at Asn-516, Asn-608, Asn-670, Asn-675, Asn-748, Asn-808, Asn-812, and Asn-890. Residues 972 to 991 (GPGRHRGDTTSPSRPPGGPI) form a disordered region.

It belongs to the glycosyl hydrolase 38 family. The cofactor is Zn(2+).

It is found in the secreted. The enzyme catalyses Hydrolysis of terminal, non-reducing alpha-D-mannose residues in alpha-D-mannosides.. In Homo sapiens (Human), this protein is Epididymis-specific alpha-mannosidase (MAN2B2).